Consider the following 81-residue polypeptide: ATP synthase subunit c (81 aa).

The next 2 helical transmembrane spans lie at 6–26 and 57–77; these read ASAS…GPGI and LAFM…LLFA.

Belongs to the ATPase C chain family. F-type ATPases have 2 components, F(1) - the catalytic core - and F(0) - the membrane proton channel. F(1) has five subunits: alpha(3), beta(3), gamma(1), delta(1), epsilon(1). F(0) has four main subunits: a(1), b(1), b'(1) and c(10-14). The alpha and beta chains form an alternating ring which encloses part of the gamma chain. F(1) is attached to F(0) by a central stalk formed by the gamma and epsilon chains, while a peripheral stalk is formed by the delta, b and b' chains.

It localises to the cellular thylakoid membrane. In terms of biological role, f(1)F(0) ATP synthase produces ATP from ADP in the presence of a proton or sodium gradient. F-type ATPases consist of two structural domains, F(1) containing the extramembraneous catalytic core and F(0) containing the membrane proton channel, linked together by a central stalk and a peripheral stalk. During catalysis, ATP synthesis in the catalytic domain of F(1) is coupled via a rotary mechanism of the central stalk subunits to proton translocation. Its function is as follows. Key component of the F(0) channel; it plays a direct role in translocation across the membrane. A homomeric c-ring of between 10-14 subunits forms the central stalk rotor element with the F(1) delta and epsilon subunits. This chain is ATP synthase subunit c, found in Gloeothece citriformis (strain PCC 7424) (Cyanothece sp. (strain PCC 7424)).